The following is a 295-amino-acid chain: MATGIALVGPGAVGTTVAALLHKAGYSPLLCGHTPRAGIELRRDGADPIVVPGPVHTSPREVAGPVDVLILAVKATQNDAARPWLTRLCDERTVVAVLQNGVEQVEQVQPHCPSSAVVPAIVWCSAETQPQGWVRLRGEAALVVPTGPAAEQFAGLLRGAGATVDCDPDFTTAAWRKLLVNALAGFMVLSGRRSAMFRRDDVAALSRRYVAECLAVARAEGARLDDDVVDEVVRLVRSAPQDMGTSMLADRAAHRPLEWDLRNGVIVRKARAHGLATPISDVLVPLLAAASDGPG.

NADP(+)-binding positions include 9–14 (GPGAVG), Asn-100, and Ala-126. Asn-100 provides a ligand contact to substrate. Lys-177 functions as the Proton donor in the catalytic mechanism. 2 residues coordinate substrate: Asn-181 and Ser-246. Glu-258 serves as a coordination point for NADP(+).

Belongs to the ketopantoate reductase family.

The protein localises to the cytoplasm. The catalysed reaction is (R)-pantoate + NADP(+) = 2-dehydropantoate + NADPH + H(+). It functions in the pathway cofactor biosynthesis; (R)-pantothenate biosynthesis; (R)-pantoate from 3-methyl-2-oxobutanoate: step 2/2. Its function is as follows. Catalyzes the NADPH-dependent reduction of ketopantoate into pantoic acid. In Mycobacterium tuberculosis (strain CDC 1551 / Oshkosh), this protein is 2-dehydropantoate 2-reductase.